A 614-amino-acid chain; its full sequence is uncharacterized protein (614 aa).

Residues 23-68 (YPIPSHNGDGESEKNSSDSTSSKVNAKVTSSLQGAPSTNDENSVSP) are disordered. A compositionally biased stretch (polar residues) spans 49–68 (KVTSSLQGAPSTNDENSVSP).

It to C.trachomatis CT875.

This is an uncharacterized protein from Chlamydia muridarum (strain MoPn / Nigg).